The primary structure comprises 457 residues: Adenylosuccinate synthetase isozyme 1 (457 aa).

The tract at residues 1-25 (MSGTRASNDRPPSAGGVKRGRLQHE) is disordered. GTP is bound by residues 42–48 (GDEGKGK) and 70–72 (GHT). Catalysis depends on Asp-43, which acts as the Proton acceptor. Residues Asp-43 and Gly-70 each contribute to the Mg(2+) site. Asp-43 is a substrate binding site. IMP is bound by residues 43 to 46 (DEGK), 68 to 71 (NAGH), Thr-163, Arg-177, Asn-256, Thr-271, and Arg-335. The active-site Proton donor is the His-71. Residue 331–337 (VTTGRKR) participates in substrate binding. GTP-binding positions include Arg-337, 363–365 (KLD), and 445–448 (GVGK).

It belongs to the adenylosuccinate synthetase family. Homodimer. Requires Mg(2+) as cofactor. Predominantly expressed in the striated muscle tissues.

Its subcellular location is the cytoplasm. It carries out the reaction IMP + L-aspartate + GTP = N(6)-(1,2-dicarboxyethyl)-AMP + GDP + phosphate + 2 H(+). The protein operates within purine metabolism; AMP biosynthesis via de novo pathway; AMP from IMP: step 1/2. Its function is as follows. Component of the purine nucleotide cycle (PNC), which interconverts IMP and AMP to regulate the nucleotide levels in various tissues, and which contributes to glycolysis and ammoniagenesis. Catalyzes the first committed step in the biosynthesis of AMP from IMP. This chain is Adenylosuccinate synthetase isozyme 1, found in Sus scrofa (Pig).